Here is a 432-residue protein sequence, read N- to C-terminus: Enolase (432 aa).

Gln-163 contacts (2R)-2-phosphoglycerate. The Proton donor role is filled by Glu-205. Asp-242, Glu-285, and Asp-312 together coordinate Mg(2+). Residues Lys-337, Arg-366, Ser-367, and Lys-388 each coordinate (2R)-2-phosphoglycerate. Lys-337 acts as the Proton acceptor in catalysis.

The protein belongs to the enolase family. Requires Mg(2+) as cofactor.

Its subcellular location is the cytoplasm. The protein resides in the secreted. It localises to the cell surface. It catalyses the reaction (2R)-2-phosphoglycerate = phosphoenolpyruvate + H2O. Its pathway is carbohydrate degradation; glycolysis; pyruvate from D-glyceraldehyde 3-phosphate: step 4/5. Functionally, catalyzes the reversible conversion of 2-phosphoglycerate (2-PG) into phosphoenolpyruvate (PEP). It is essential for the degradation of carbohydrates via glycolysis. The sequence is that of Enolase from Bifidobacterium longum (strain DJO10A).